A 282-amino-acid chain; its full sequence is Pantothenate synthetase (282 aa).

ATP is bound at residue 30-37 (MGNLHEGH). His37 acts as the Proton donor in catalysis. (R)-pantoate is bound at residue Gln61. A beta-alanine-binding site is contributed by Gln61. 148 to 151 (GQKD) provides a ligand contact to ATP. (R)-pantoate is bound at residue Gln154. ATP-binding positions include Val177 and 185–188 (LSSR).

This sequence belongs to the pantothenate synthetase family. In terms of assembly, homodimer.

It is found in the cytoplasm. It catalyses the reaction (R)-pantoate + beta-alanine + ATP = (R)-pantothenate + AMP + diphosphate + H(+). Its pathway is cofactor biosynthesis; (R)-pantothenate biosynthesis; (R)-pantothenate from (R)-pantoate and beta-alanine: step 1/1. Catalyzes the condensation of pantoate with beta-alanine in an ATP-dependent reaction via a pantoyl-adenylate intermediate. The polypeptide is Pantothenate synthetase (Acinetobacter baumannii (strain AB0057)).